A 630-amino-acid polypeptide reads, in one-letter code: Zinc finger protein MSN4 (630 aa).

N-acetylmethionine is present on M1. The segment covering 37–56 (TTNVSATSSNDNSANNSISS) has biased composition (low complexity). Disordered stretches follow at residues 37 to 77 (TTNV…ATNT) and 115 to 137 (FVND…DKIY). The residue at position 178 (S178) is a Phosphoserine. The 9aaTAD signature appears at 237-245 (SILEDFVSS). Phosphoserine is present on S263. The segment covering 292-303 (KNSSNSKPTQQI) has biased composition (polar residues). 2 disordered regions span residues 292 to 322 (KNSS…SPTT) and 360 to 379 (SISS…RQQR). S316 and S319 each carry phosphoserine. Over residues 360 to 373 (SISSSLNRISHSSS) the composition is skewed to low complexity. Residue T479 is modified to Phosphothreonine. Residues 502–566 (TSQAHHAAQH…KSITTIDPNN (65 aa)) form a disordered region. The span at 504–515 (QAHHAAQHHQQQ) shows a compositional bias: low complexity. 2 stretches are compositionally biased toward polar residues: residues 516–525 (PTKQATVSPN) and 532–547 (SSVT…NNNG). The residue at position 558 (S558) is a Phosphoserine. C2H2-type zinc fingers lie at residues 573–596 (FKCK…RSVH) and 602–624 (FACM…LKTH).

Its subcellular location is the cytoplasm. It localises to the nucleus. In terms of biological role, positive transcriptional factor that acts as a component of the stress responsive system. Recognizes and binds to the stress response element (STRE) which is involved in the response to various forms of stress (heat, oxidative, osmotic, etc.). Involved in the regulation of the CTT1, DDR2, HSP12 genes. This is Zinc finger protein MSN4 (MSN4) from Saccharomyces cerevisiae (strain ATCC 204508 / S288c) (Baker's yeast).